Here is a 476-residue protein sequence, read N- to C-terminus: Adenosylhomocysteinase (476 aa).

Substrate-binding residues include T62, D141, and E201. T202 to T204 serves as a coordination point for NAD(+). Substrate-binding residues include K231 and D235. NAD(+) contacts are provided by residues N236, G265–G270, E288, N323, I344–H346, and N389.

Belongs to the adenosylhomocysteinase family. It depends on NAD(+) as a cofactor.

The protein localises to the cytoplasm. It carries out the reaction S-adenosyl-L-homocysteine + H2O = L-homocysteine + adenosine. It participates in amino-acid biosynthesis; L-homocysteine biosynthesis; L-homocysteine from S-adenosyl-L-homocysteine: step 1/1. Functionally, may play a key role in the regulation of the intracellular concentration of adenosylhomocysteine. This is Adenosylhomocysteinase from Myxococcus xanthus (strain DK1622).